A 94-amino-acid chain; its full sequence is MFKVNEYFDAKVASIAFQTETKPATIGVMAPGDYEFGTSEHETMTVTSGALTVKLPGSADWQTFVAGETFEIEADQKFQVKVAIDTAYLCLYGE.

Belongs to the nucleoside phosphorylase PpnP family.

The catalysed reaction is a purine D-ribonucleoside + phosphate = a purine nucleobase + alpha-D-ribose 1-phosphate. It carries out the reaction adenosine + phosphate = alpha-D-ribose 1-phosphate + adenine. It catalyses the reaction cytidine + phosphate = cytosine + alpha-D-ribose 1-phosphate. The enzyme catalyses guanosine + phosphate = alpha-D-ribose 1-phosphate + guanine. The catalysed reaction is inosine + phosphate = alpha-D-ribose 1-phosphate + hypoxanthine. It carries out the reaction thymidine + phosphate = 2-deoxy-alpha-D-ribose 1-phosphate + thymine. It catalyses the reaction uridine + phosphate = alpha-D-ribose 1-phosphate + uracil. The enzyme catalyses xanthosine + phosphate = alpha-D-ribose 1-phosphate + xanthine. Its function is as follows. Catalyzes the phosphorolysis of diverse nucleosides, yielding D-ribose 1-phosphate and the respective free bases. Can use uridine, adenosine, guanosine, cytidine, thymidine, inosine and xanthosine as substrates. Also catalyzes the reverse reactions. The sequence is that of Pyrimidine/purine nucleoside phosphorylase from Alcanivorax borkumensis (strain ATCC 700651 / DSM 11573 / NCIMB 13689 / SK2).